A 374-amino-acid chain; its full sequence is Succinyl-diaminopimelate desuccinylase (374 aa).

Position 66 (His66) interacts with Zn(2+). The active site involves Asp68. Asp99 contributes to the Zn(2+) binding site. Residue Glu133 is the Proton acceptor of the active site. Zn(2+) contacts are provided by Glu134, Glu162, and His348.

It belongs to the peptidase M20A family. DapE subfamily. As to quaternary structure, homodimer. Zn(2+) serves as cofactor. Requires Co(2+) as cofactor.

It catalyses the reaction N-succinyl-(2S,6S)-2,6-diaminopimelate + H2O = (2S,6S)-2,6-diaminopimelate + succinate. It functions in the pathway amino-acid biosynthesis; L-lysine biosynthesis via DAP pathway; LL-2,6-diaminopimelate from (S)-tetrahydrodipicolinate (succinylase route): step 3/3. Its function is as follows. Catalyzes the hydrolysis of N-succinyl-L,L-diaminopimelic acid (SDAP), forming succinate and LL-2,6-diaminopimelate (DAP), an intermediate involved in the bacterial biosynthesis of lysine and meso-diaminopimelic acid, an essential component of bacterial cell walls. This chain is Succinyl-diaminopimelate desuccinylase, found in Coxiella burnetii (strain RSA 331 / Henzerling II).